The primary structure comprises 109 residues: uncharacterized protein (109 aa).

Residues 12–32 form a helical membrane-spanning segment; sequence PNILIKGVYIFVLYGMCICIV.

The protein localises to the membrane. This is an uncharacterized protein from Saccharomyces cerevisiae (strain ATCC 204508 / S288c) (Baker's yeast).